The primary structure comprises 119 residues: Holo-[acyl-carrier-protein] synthase (119 aa).

Mg(2+)-binding residues include aspartate 7 and glutamate 53.

Belongs to the P-Pant transferase superfamily. AcpS family. Mg(2+) is required as a cofactor.

The protein resides in the cytoplasm. The catalysed reaction is apo-[ACP] + CoA = holo-[ACP] + adenosine 3',5'-bisphosphate + H(+). Transfers the 4'-phosphopantetheine moiety from coenzyme A to a Ser of acyl-carrier-protein. This is Holo-[acyl-carrier-protein] synthase from Dehalococcoides mccartyi (strain ATCC BAA-2266 / KCTC 15142 / 195) (Dehalococcoides ethenogenes (strain 195)).